The following is a 1786-amino-acid chain: Laminin subunit beta-1 (1786 aa).

An N-terminal signal peptide occupies residues 1–21 (MGLLQVFAFGVLALWGTRVCA). The 240-residue stretch at 31-270 (AEGSCYPATG…AVYDMVVRGN (240 aa)) folds into the Laminin N-terminal domain. Residue asparagine 120 is glycosylated (N-linked (GlcNAc...) asparagine). Serine 250 bears the Phosphoserine mark. Cystine bridges form between cysteine 271/cysteine 280, cysteine 273/cysteine 298, cysteine 300/cysteine 309, cysteine 312/cysteine 332, cysteine 335/cysteine 344, cysteine 337/cysteine 362, cysteine 365/cysteine 374, cysteine 377/cysteine 395, cysteine 398/cysteine 411, cysteine 400/cysteine 426, cysteine 428/cysteine 437, cysteine 440/cysteine 455, cysteine 458/cysteine 472, cysteine 460/cysteine 479, cysteine 481/cysteine 490, cysteine 493/cysteine 507, cysteine 510/cysteine 522, cysteine 512/cysteine 529, and cysteine 531/cysteine 540. 4 Laminin EGF-like domains span residues 271 to 334 (CFCY…ACKK), 335 to 397 (CNCN…LCEP), 398 to 457 (CTCD…GCKS), and 458 to 509 (CACN…GCRP). Residue asparagine 356 is glycosylated (N-linked (GlcNAc...) asparagine). The Laminin EGF-like 5; truncated domain occupies 510–540 (CDCDLGGALNNSCSEDSGQCSCLPHMIGRQC). N-linked (GlcNAc...) asparagine glycosylation occurs at asparagine 519. Residues 549 to 767 (FTTLDHYIYE…IIFSISALIH (219 aa)) form the Laminin IV type B domain. N-linked (GlcNAc...) asparagine glycosylation occurs at asparagine 677. 32 cysteine pairs are disulfide-bonded: cysteine 773/cysteine 785, cysteine 775/cysteine 792, cysteine 794/cysteine 803, cysteine 806/cysteine 818, cysteine 821/cysteine 833, cysteine 823/cysteine 840, cysteine 842/cysteine 851, cysteine 854/cysteine 864, cysteine 867/cysteine 876, cysteine 869/cysteine 883, cysteine 886/cysteine 895, cysteine 898/cysteine 914, cysteine 917/cysteine 933, cysteine 919/cysteine 944, cysteine 946/cysteine 955, cysteine 958/cysteine 973, cysteine 976/cysteine 990, cysteine 978/cysteine 997, cysteine 1000/cysteine 1009, cysteine 1012/cysteine 1025, cysteine 1028/cysteine 1040, cysteine 1030/cysteine 1054, cysteine 1056/cysteine 1065, cysteine 1068/cysteine 1081, cysteine 1084/cysteine 1096, cysteine 1086/cysteine 1103, cysteine 1105/cysteine 1114, cysteine 1117/cysteine 1129, cysteine 1132/cysteine 1144, cysteine 1134/cysteine 1151, cysteine 1153/cysteine 1162, and cysteine 1165/cysteine 1176. Laminin EGF-like domains are found at residues 773-820 (CECD…GCKP), 821-866 (CDCH…SCQP), 867-916 (CQCN…HCRP), 917-975 (CPCP…SCQP), 976-1027 (CQCH…DCRK), 1028-1083 (CVCN…GCGP), 1084-1131 (CNCN…ECRA), and 1132-1178 (CDCD…DCTP). Asparagine 1041 carries an N-linked (GlcNAc...) asparagine glycan. The tract at residues 1179-1397 (CHQCFALWDA…LDLSAVAQMT (219 aa)) is domain II. N-linked (GlcNAc...) asparagine glycans are attached at residues asparagine 1195, asparagine 1279, asparagine 1336, and asparagine 1343. Positions 1216–1315 (YRETVDSVEK…LEFIKNSDIQ (100 aa)) form a coiled coil. The stretch at 1368–1388 (KEQQEEQARLLDELAGKLQSL) forms a coiled coil. The domain alpha stretch occupies residues 1398 to 1430 (CGTPPGADCSESECGGPNCRTDEGEKKCGGPGC). Residues 1431–1786 (GGLVTVAHSA…EKVAVYSTCL (356 aa)) form a domain I region. Positions 1448 to 1778 (DRDVLSALAE…RSLLKDISEK (331 aa)) form a coiled coil. N-linked (GlcNAc...) asparagine glycosylation occurs at asparagine 1487. The residue at position 1496 (serine 1496) is a Phosphoserine. N-linked (GlcNAc...) asparagine glycans are attached at residues asparagine 1542 and asparagine 1643. Serine 1666 carries the post-translational modification Phosphoserine.

In terms of assembly, laminin is a complex glycoprotein, consisting of three different polypeptide chains (alpha, beta, gamma), which are bound to each other by disulfide bonds into a cross-shaped molecule comprising one long and three short arms with globules at each end. Beta-1 is a subunit of laminin-1 (laminin-111 or EHS laminin), laminin-2 (laminin-211 or merosin), laminin-6 (laminin-311 or K-laminin), laminin-8 (laminin-411), laminin-10 (laminin-511) and laminin-12 (laminin-213). Interacts with ITGB1. Widely expressed in the embryo. High levels are detected in the cerebellar basement membrane, at postnatal day 7.

The protein localises to the secreted. It is found in the extracellular space. It localises to the extracellular matrix. The protein resides in the basement membrane. Binding to cells via a high affinity receptor, laminin is thought to mediate the attachment, migration and organization of cells into tissues during embryonic development by interacting with other extracellular matrix components. Involved in the organization of the laminar architecture of the cerebral cortex. It is probably required for the integrity of the basement membrane/glia limitans that serves as an anchor point for the endfeet of radial glial cells and as a physical barrier to migrating neurons. Radial glial cells play a central role in cerebral cortical development, where they act both as the proliferative unit of the cerebral cortex and a scaffold for neurons migrating toward the pial surface. The sequence is that of Laminin subunit beta-1 (Lamb1) from Mus musculus (Mouse).